The following is a 1081-amino-acid chain: MASKTTFKDLQEIPDFPKEEENILKFWDEINAFKQQLEKTKDCPPFTFYDGPPFATGLPHYGNLLAGTIKDVVCRYASQNGKYVERRFGWDCHGLPVEYEIDKKLGITNRQEVLKMGVDKYNAECRSIVMRYAQEWRSIVNRFGRWVDFDNDYKTLDLKFMESVWWVFKQMFDKGLVYRGCKVMPYSNGCATVLSNFETQQNYKEVDDPSLFIAFKTAEDPKTKFIAWTTTPWTLPSNLALVINKDFDYVKVLDAKTQEHYILAECRLPELYKKDKDGYKILEKFKGSELVGREYEPLFPYFLSRKQDGCFRILAGDFVTADAGTGIVHCAPGFGDDDYKVSVANNIIKPDDPPVPVDENGHFTNVVSDFAGVYIKEADKLIRKNLKERGLLLVDSSFKHNYPFCWRSDTPLIYKAVHCWFIKVTALKDDLLANNKKAYWVPKFAQEGRFNNWLQNVSDWCFSRSRFWGNPIPIWVSEDFEEVVCIGSVEELKKLTGATEITDLHKDFIDHLTIPSQKGKGVLRRIDEVFDCWFESGSMPYGQQHYPFSMNEEEFSKRFPADFIGEGIDQTRGWFYTLNVISTALRNSNPYKNLIVNGIVLAADGKKMSKSKKNYDDPLLIASKYSVDAIRLYMINSPLVRAEEMSFKSEGVFAVKKDIFLPWYNAYKFLIQSITRWELATGKDYMFNEQLSVDTTKLTNPTDRWIIISCQNLINYVRIEMEKYHLYNVVPRLIHFLENLTNWYIRLNRNRLKGDYGLEEQETSLNVLFNVILNSTILMSPLVPFITESFYQNLRKVIPKGSSYLEESIHFLRIPTPKQELLDEKIERNFERMQNIINFARTLREKRKVSLKQPIMSLTVINQDQEFHDSLKDYIQYIEDEINTPSILHEINTANYVDLKAIPNHKLLGQKLGKEYNKDLKAAAGNLSAKDIETLKTTGSIDLVGKKLLLEDFTITQNYKKEYSSGDLELGGEGEVILLLNLAQDEKLKSKGLVREFTSNVQKTKKKTGLKVDDNIVIYYDVTKAPKLNAAIQSDLEAVQKVLKKPLVPLSEKNAALKIVENSLLTFQVDEESVTIEIAYA.

A 'HIGH' region motif is present at residues 53-63 (PFATGLPHYGN). The short motif at 607–611 (KMSKS) is the 'KMSKS' region element. Residue lysine 610 coordinates ATP.

It belongs to the class-I aminoacyl-tRNA synthetase family.

The catalysed reaction is tRNA(Ile) + L-isoleucine + ATP = L-isoleucyl-tRNA(Ile) + AMP + diphosphate. The sequence is that of Isoleucine--tRNA ligase (ILSA) from Tetrahymena thermophila.